The following is a 63-amino-acid chain: Keratin-associated protein 8-1 (63 aa).

The segment at 12 to 54 (PGCYWGSYGYPLGYSVGCGYGSTYSPVGYGFGYGYNGCGAFGY) is 12 X 2 AA repeats of G-[YCGS].

This sequence belongs to the KRTAP type 8 family. As to quaternary structure, interacts with hair keratins. In terms of tissue distribution, is essentially restricted to only one vertical half of the hair forming compartment and in beard hairs is absent from the central medulla.

In the hair cortex, hair keratin intermediate filaments are embedded in an interfilamentous matrix, consisting of hair keratin-associated proteins (KRTAP), which are essential for the formation of a rigid and resistant hair shaft through their extensive disulfide bond cross-linking with abundant cysteine residues of hair keratins. The matrix proteins include the high-sulfur and high-glycine-tyrosine keratins. The protein is Keratin-associated protein 8-1 (KRTAP8-1) of Homo sapiens (Human).